Consider the following 482-residue polypeptide: Ubiquitin carboxyl-terminal hydrolase MINDY-1 (482 aa).

The interval 1–119 is disordered; that stretch reads MEQPQAECPA…RPQQLPQSPR (119 aa). The span at 21-66 shows a compositional bias: basic and acidic residues; it reads ESEKHEALSGPEKHPQDKDGADAAPEKHPQDKDGADAHGEAGKQKS. The span at 82–94 shows a compositional bias: pro residues; it reads CPPPEASSSPPGP. Residues 106–119 show a composition bias toward polar residues; sequence EACSRPQQLPQSPR. S117 carries the phosphoserine modification. Residue C151 is the Nucleophile of the active site. H333 (proton acceptor) is an active-site residue. The interval 402–441 is ubiquitin-binding domain (UBD); that stretch reads QVDQDYLIALSLQQQQQPQGMLGLSDLELAQQLQQEEYQQ. Low complexity predominate over residues 437–446; that stretch reads EEYQQQQAVQ. Residues 437-482 form a disordered region; it reads EEYQQQQAVQPVRTRAPSSPGRGATSGRPAGERRQRSKTESDCVLL. S454 carries the post-translational modification Phosphoserine. Residues 466 to 482 show a composition bias toward basic and acidic residues; that stretch reads AGERRQRSKTESDCVLL.

This sequence belongs to the MINDY deubiquitinase family. FAM63 subfamily.

The enzyme catalyses Thiol-dependent hydrolysis of ester, thioester, amide, peptide and isopeptide bonds formed by the C-terminal Gly of ubiquitin (a 76-residue protein attached to proteins as an intracellular targeting signal).. Hydrolase that can specifically remove 'Lys-48'-linked conjugated ubiquitin from proteins. Has exodeubiquitinase activity and has a preference for long polyubiquitin chains. May play a regulatory role at the level of protein turnover. The polypeptide is Ubiquitin carboxyl-terminal hydrolase MINDY-1 (Mindy1) (Rattus norvegicus (Rat)).